A 172-amino-acid polypeptide reads, in one-letter code: Epididymal secretory protein 4 (172 aa).

An N-terminal signal peptide occupies residues 1 to 21 (MIAVLLLVFGMTPDYIFPVSA). Residues C82 and C167 are joined by a disulfide bond.

It belongs to the calycin superfamily. Lipocalin family. As to expression, secreted by the epididymal epithelial cells.

It is found in the secreted. The protein resides in the extracellular space. Its function is as follows. Could transport small hydrophobic molecules into the epididymal fluid during the sperm maturation. Binds to the head region of spermatozoa and plays a key role in sperm maturation. The protein is Epididymal secretory protein 4 of Zootoca vivipara (Common lizard).